A 207-amino-acid chain; its full sequence is Outer-membrane lipoprotein carrier protein (207 aa).

Residues 1-21 form the signal peptide; it reads MRLIRMLLATALTFSVIPAHA.

It belongs to the LolA family. Monomer.

It localises to the periplasm. Functionally, participates in the translocation of lipoproteins from the inner membrane to the outer membrane. Only forms a complex with a lipoprotein if the residue after the N-terminal Cys is not an aspartate (The Asp acts as a targeting signal to indicate that the lipoprotein should stay in the inner membrane). The chain is Outer-membrane lipoprotein carrier protein from Pseudomonas syringae pv. tomato (strain ATCC BAA-871 / DC3000).